Here is an 852-residue protein sequence, read N- to C-terminus: Patatin-like phospholipase domain-containing protein CaO19.1504 (852 aa).

Residues 41–52 (ATTDITTTPIND) show a composition bias toward low complexity. A disordered region spans residues 41–184 (ATTDITTTPI…KKTTPTSSTS (144 aa)). Residues 75-95 (INGTVSDSSSITDEDIMNSSY) are compositionally biased toward polar residues. Positions 101 to 110 (SSTNLKSNST) are enriched in low complexity. A compositionally biased stretch (acidic residues) spans 113 to 122 (DDDDDDDDDD). Composition is skewed to low complexity over residues 129–142 (SGTT…SLSS) and 158–171 (GGSR…KGSS). A helical membrane pass occupies residues 207–227 (WPILIFVFSWIGILGIFYFMI). The PNPLA domain maps to 396 to 588 (LCLSGGACFA…RTDIPIEALN (193 aa)). Positions 427 to 431 (GTSGG) match the GXSXG motif. Serine 429 (nucleophile) is an active-site residue. The active-site Proton acceptor is the aspartate 575. Residues 800–840 (KKLLDELDNEDEEEDEEEEEVDVDDDDDDDDDSLSDSFEIT) are disordered. Residues 805–833 (ELDNEDEEEDEEEEEVDVDDDDDDDDDSL) show a composition bias toward acidic residues.

The protein belongs to the PLPL family.

The protein localises to the membrane. In terms of biological role, probable lipid hydrolase. The polypeptide is Patatin-like phospholipase domain-containing protein CaO19.1504 (Candida albicans (strain SC5314 / ATCC MYA-2876) (Yeast)).